The primary structure comprises 858 residues: Neural cell adhesion molecule 1 (858 aa).

Residues 1-19 (MLRTKDLIWTLFFLGTAVS) form the signal peptide. Ig-like C2-type domains lie at 20–111 (LQVD…ATVN), 116–205 (QKLM…KDIQ), 212–302 (PTVQ…ASIH), 309–414 (PKIT…LEVQ), and 417–502 (PKLQ…ESLE). Over 20 to 721 (LQVDIVPSQG…NGSPTAGLST (702 aa)) the chain is Extracellular. Cystine bridges form between cysteine 41–cysteine 96 and cysteine 139–cysteine 189. Residues 152–156 (KHKGR) and 161–165 (KKDVR) each bind heparin. An N-linked (GlcNAc...) asparagine glycan is attached at asparagine 222. A disulfide bond links cysteine 235 and cysteine 288. N-linked (GlcNAc...) asparagine glycans are attached at residues asparagine 316, asparagine 348, asparagine 434, asparagine 460, and asparagine 489. Residues cysteine 330 and cysteine 396 are joined by a disulfide bond. Cysteine 437 and cysteine 490 are joined by a disulfide. Fibronectin type-III domains lie at 510-609 (TPSS…TQPV) and 611-706 (EPSA…SAQP). Residues 722–739 (GAIVGILIVIFVLLLVVM) form a helical membrane-spanning segment. Over 740–858 (DITCYFLNKC…TQTKENESKA (119 aa)) the chain is Cytoplasmic. A disordered region spans residues 765–858 (PGAKGKDMEE…TQTKENESKA (94 aa)). Composition is skewed to basic and acidic residues over residues 768-809 (KGKD…HTEP) and 817-834 (EPEKGPVETKSEPQESEA). A phosphoserine mark is found at serine 780 and serine 784.

In terms of assembly, interacts with MDK. Found in a complex with SLC39A6, SLC39A10 and with NCAM1; this complex controls NCAM1 phosphorylation and integration into focal adhesion complexes during epithelial-tomesenchymal transition. Interacts with synaptic plasticity regulator PANTS. Polysialylated by ST8SIA2 and ST8SIA4. Polysialylation modulates cell interactions by confering both attractive and repulsive properties that are highly regulated by ST8SIA2 and ST8SIA4. Polysialylation is formed on a-2,3-linked sialic acid of core glycans.

The protein localises to the cell membrane. In terms of biological role, this protein is a cell adhesion molecule involved in neuron-neuron adhesion, neurite fasciculation, outgrowth of neurites, etc. The polypeptide is Neural cell adhesion molecule 1 (Rattus norvegicus (Rat)).